A 279-amino-acid chain; its full sequence is Polyamine aminopropyltransferase (279 aa).

The PABS domain occupies 4–237; the sequence is IEWYPRGYGV…SPWAFLVGIK (234 aa). Gln29 is a binding site for S-methyl-5'-thioadenosine. The spermidine site is built by His60 and Asp84. S-methyl-5'-thioadenosine-binding positions include Glu104 and 141–142; that span reads DG. Catalysis depends on Asp158, which acts as the Proton acceptor. Residue 158-161 coordinates spermidine; the sequence is DSTD. An S-methyl-5'-thioadenosine-binding site is contributed by Pro165.

Belongs to the spermidine/spermine synthase family. As to quaternary structure, homodimer or homotetramer.

The protein resides in the cytoplasm. It carries out the reaction S-adenosyl 3-(methylsulfanyl)propylamine + putrescine = S-methyl-5'-thioadenosine + spermidine + H(+). Its pathway is amine and polyamine biosynthesis; spermidine biosynthesis; spermidine from putrescine: step 1/1. Its function is as follows. Catalyzes the irreversible transfer of a propylamine group from the amino donor S-adenosylmethioninamine (decarboxy-AdoMet) to putrescine (1,4-diaminobutane) to yield spermidine. This is Polyamine aminopropyltransferase from Pyrococcus abyssi (strain GE5 / Orsay).